We begin with the raw amino-acid sequence, 252 residues long: Adenosylcobinamide-GDP ribazoletransferase (252 aa).

7 helical membrane-spanning segments follow: residues 35-55, 58-78, 113-133, 139-159, 170-190, 192-212, and 231-251; these read AMLP…FYIL, IFPA…LIGG, FAVL…SFII, YAII…FLIG, LFIE…MIVP, VLLI…IITL, and GANN…LLYI.

Belongs to the CobS family. Mg(2+) serves as cofactor.

The protein localises to the cell membrane. The catalysed reaction is alpha-ribazole + adenosylcob(III)inamide-GDP = adenosylcob(III)alamin + GMP + H(+). It carries out the reaction alpha-ribazole 5'-phosphate + adenosylcob(III)inamide-GDP = adenosylcob(III)alamin 5'-phosphate + GMP + H(+). It participates in cofactor biosynthesis; adenosylcobalamin biosynthesis; adenosylcobalamin from cob(II)yrinate a,c-diamide: step 7/7. Its function is as follows. Joins adenosylcobinamide-GDP and alpha-ribazole to generate adenosylcobalamin (Ado-cobalamin). Also synthesizes adenosylcobalamin 5'-phosphate from adenosylcobinamide-GDP and alpha-ribazole 5'-phosphate. This chain is Adenosylcobinamide-GDP ribazoletransferase, found in Clostridium tetani (strain Massachusetts / E88).